The chain runs to 361 residues: MTSLYALIRPLLFRLDAERAHDLTAKALRVTSRAPLLPRLIRALYAWEDPLLAVDWSGLHFANPVGVAAGFDKRADLVDGLALLGFGHIEVGTVTPRPQPGNPRPRLFRLPEDTALINRLGFNSPGMVAVARALRARRSRDVIVGVNIGKNRDTPLERAVEDYVATFVALAPIADYVAVNISSPNTPGLRRLHERAALETLLHELTRLNRALPHPRPIALKVSPDETPDQLEAVVRAGCDAGIAAFIATNTTLARDDLHSRLAIETGGLSGRPLTQRARQVIGAIYRLTHGAPPVIGVGGIATAEDAYQHIRAGARLIQIYTGMVYAGPAIARDIKQGLARRLRRDGFTSLEEAVGVMVAA.

Residues 69–73 (AGFDK) and threonine 93 contribute to the FMN site. Lysine 73 is a binding site for substrate. 118 to 122 (NRLGF) contributes to the substrate binding site. Residues asparagine 147 and asparagine 180 each coordinate FMN. A substrate-binding site is contributed by asparagine 180. Serine 183 serves as the catalytic Nucleophile. A substrate-binding site is contributed by asparagine 185. FMN contacts are provided by lysine 221 and threonine 249. 250 to 251 (NT) contacts substrate. Residues glycine 271, glycine 300, and 321-322 (YT) contribute to the FMN site.

Belongs to the dihydroorotate dehydrogenase family. Type 2 subfamily. Monomer. FMN is required as a cofactor.

It localises to the cell membrane. It catalyses the reaction (S)-dihydroorotate + a quinone = orotate + a quinol. Its pathway is pyrimidine metabolism; UMP biosynthesis via de novo pathway; orotate from (S)-dihydroorotate (quinone route): step 1/1. In terms of biological role, catalyzes the conversion of dihydroorotate to orotate with quinone as electron acceptor. The protein is Dihydroorotate dehydrogenase (quinone) of Roseiflexus sp. (strain RS-1).